We begin with the raw amino-acid sequence, 410 residues long: Beta-arrestin-2 (410 aa).

The residue at position 48 (Y48) is a Phosphotyrosine. Hydroxyproline; by PHD2 is present on residues P176 and P181. Residues 241-410 (ADICLFSTAQ…KDDDCDDQFC (170 aa)) are interaction with TRAF6. A Phosphoserine modification is found at S361. The segment at 364 to 410 (RETDVPVDTNLIEFDTNYATDDDIVFEDFARLRLKGMKDDDCDDQFC) is interaction with AP2B1. T383 is subject to Phosphothreonine. Residues 386–396 (DIVFEDFARLR) carry the [DE]-X(1,2)-F-X-X-[FL]-X-X-X-R motif motif.

It belongs to the arrestin family. In terms of assembly, homooligomer; the self-association is mediated by InsP6-binding. Heterooligomer with ARRB1; the association is mediated by InsP6-binding. Interacts with ADRB2 and CHRM2. Interacts with PDE4A. Interacts with PDE4D. Interacts with MAPK10, MAPK1 and MAPK3. Interacts with DRD2. Interacts with FSHR. Interacts with CLTC. Interacts with HTR2C. Interacts with CCR5. Interacts with CXCR4. Interacts with SRC. Interacts with DUSP16; the interaction is interrupted by stimulation of AGTR1 and activation of MAPK10. Interacts with CHUK; the interaction is enhanced stimulation of ADRB2. Interacts with RELA. Interacts with MDM2; the interaction is enhanced by activation of GPCRs. Interacts with SLC9A5. Interacts with TRAF6. Interacts with IGF1R. Interacts with ENG. Interacts with ARRB2. Interacts with KIR2DL1, KIR2DL3 and KIR2DL4. Interacts with LDLR. Interacts with AP2B1. Interacts with C5AR1. Interacts with RAF1. Interacts with MAP2K1. Interacts with MAPK1. Interacts with MAPK10; the interaction enhances MAPK10 activation by MAP3K5. Interacts with MAP2K4; the interaction is enhanced by presence of MAP3K5 and MAPK10. Interacts with MAP3K5. Interacts with AKT1. Interacts with IKBKB and MAP3K14. Interacts with SMO (activated). Interacts with GSK3A and GSK3B. Interacts with CXCR4; the interaction is dependent on C-terminal phosphorylation of CXCR4 and allows activation of MAPK1 and MAPK3. Interacts with GPR143. Interacts with HCK and CXCR1 (phosphorylated). Associates with protein phosphatase 2A (PP2A). Interacts with ACKR3 and ACKR4. Interacts with ARRDC1; the interaction is direct. Interacts with GPR61, GPR62 and GPR135. Interacts (via NACHT and LRR domains) with NLRP3; this interaction is direct and inducible by omega-3 polyunsaturated fatty acids (PUFAs). Interacts with FFAR4 (via C-terminus); this interaction is stimulated by long-chain fatty acids (LCFAs). Interacts with GPR35. Interacts with GPR84. Interacts with TIGIT; this interaction inhibits the NF-kappa-B pathway. Interacts with TGFBR3. Post-translationally, phosphorylated at Thr-383 in the cytoplasm; probably dephosphorylated at the plasma membrane. The phosphorylation does not regulate internalization and recycling of ADRB2, interaction with clathrin or AP2B1. In terms of processing, the ubiquitination status appears to regulate the formation and trafficking of beta-arrestin-GPCR complexes and signaling. Ubiquitination appears to occur GPCR-specific. Ubiquitinated by MDM2; the ubiquitination is required for rapid internalization of ADRB2. Deubiquitinated by USP33; the deubiquitination leads to a dissociation of the beta-arrestin-GPCR complex. Stimulation of a class A GPCR, such as ADRB2, induces transient ubiquitination and subsequently promotes association with USP33. Stimulation of a class B GPCR promotes a sustained ubiquitination. Deubiquitinated by USP20; allowing USP20 to deubiquitinate TRAF6 leading to inhibition of NF-kappa-B signaling. Hydroxylation by PHD2 modulates the rate of internalization by slowing down recruitment to the plasma membrane and inhibiting subsequent co-internalization with class A receptors. As to expression, predominantly localized in neuronal tissues and in the spleen.

The protein localises to the cytoplasm. Its subcellular location is the nucleus. It localises to the cell membrane. The protein resides in the membrane. It is found in the clathrin-coated pit. The protein localises to the cytoplasmic vesicle. Its function is as follows. Functions in regulating agonist-mediated G-protein coupled receptor (GPCR) signaling by mediating both receptor desensitization and resensitization processes. During homologous desensitization, beta-arrestins bind to the GPRK-phosphorylated receptor and sterically preclude its coupling to the cognate G-protein; the binding appears to require additional receptor determinants exposed only in the active receptor conformation. The beta-arrestins target many receptors for internalization by acting as endocytic adapters (CLASPs, clathrin-associated sorting proteins) and recruiting the GPRCs to the adapter protein 2 complex 2 (AP-2) in clathrin-coated pits (CCPs). However, the extent of beta-arrestin involvement appears to vary significantly depending on the receptor, agonist and cell type. Internalized arrestin-receptor complexes traffic to intracellular endosomes, where they remain uncoupled from G-proteins. Two different modes of arrestin-mediated internalization occur. Class A receptors, like ADRB2, OPRM1, ENDRA, D1AR and ADRA1B dissociate from beta-arrestin at or near the plasma membrane and undergo rapid recycling. Class B receptors, like AVPR2, AGTR1, NTSR1, TRHR and TACR1 internalize as a complex with arrestin and traffic with it to endosomal vesicles, presumably as desensitized receptors, for extended periods of time. Receptor resensitization then requires that receptor-bound arrestin is removed so that the receptor can be dephosphorylated and returned to the plasma membrane. Mediates endocytosis of CCR7 following ligation of CCL19 but not CCL21. Involved in internalization of P2RY1, P2RY4, P2RY6 and P2RY11 and ATP-stimulated internalization of P2RY2. Involved in phosphorylation-dependent internalization of OPRD1 and subsequent recycling or degradation. Involved in ubiquitination of IGF1R. Beta-arrestins function as multivalent adapter proteins that can switch the GPCR from a G-protein signaling mode that transmits short-lived signals from the plasma membrane via small molecule second messengers and ion channels to a beta-arrestin signaling mode that transmits a distinct set of signals that are initiated as the receptor internalizes and transits the intracellular compartment. Acts as a signaling scaffold for MAPK pathways such as MAPK1/3 (ERK1/2) and MAPK10 (JNK3). ERK1/2 and JNK3 activated by the beta-arrestin scaffold are largely excluded from the nucleus and confined to cytoplasmic locations such as endocytic vesicles, also called beta-arrestin signalosomes. Acts as a signaling scaffold for the AKT1 pathway. GPCRs for which the beta-arrestin-mediated signaling relies on both ARRB1 and ARRB2 (codependent regulation) include ADRB2, F2RL1 and PTH1R. For some GPCRs the beta-arrestin-mediated signaling relies on either ARRB1 or ARRB2 and is inhibited by the other respective beta-arrestin form (reciprocal regulation). Increases ERK1/2 signaling in AGTR1- and AVPR2-mediated activation (reciprocal regulation). Involved in CCR7-mediated ERK1/2 signaling involving ligand CCL19. Is involved in type-1A angiotensin II receptor/AGTR1-mediated ERK activity. Is involved in type-1A angiotensin II receptor/AGTR1-mediated MAPK10 activity. Is involved in dopamine-stimulated AKT1 activity in the striatum by disrupting the association of AKT1 with its negative regulator PP2A. Involved in AGTR1-mediated chemotaxis. Appears to function as signaling scaffold involved in regulation of MIP-1-beta-stimulated CCR5-dependent chemotaxis. Involved in attenuation of NF-kappa-B-dependent transcription in response to GPCR or cytokine stimulation by interacting with and stabilizing CHUK. Suppresses UV-induced NF-kappa-B-dependent activation by interacting with CHUK. The function is promoted by stimulation of ADRB2 and dephosphorylation of ARRB2. Involved in IL8-mediated granule release in neutrophils. Involved in p53/TP53-mediated apoptosis by regulating MDM2 and reducing the MDM2-mediated degradation of p53/TP53. May serve as nuclear messenger for GPCRs. Upon stimulation of OR1D2, may be involved in regulation of gene expression during the early processes of fertilization. Also involved in regulation of receptors other than GPCRs. Involved in endocytosis of TGFBR2 and TGFBR3 and down-regulates TGF-beta signaling such as NF-kappa-B activation. Involved in endocytosis of low-density lipoprotein receptor/LDLR. Involved in endocytosis of smoothened homolog/Smo, which also requires GRK2. Involved in endocytosis of SLC9A5. Involved in endocytosis of ENG and subsequent TGF-beta-mediated ERK activation and migration of epithelial cells. Involved in Toll-like receptor and IL-1 receptor signaling through the interaction with TRAF6 which prevents TRAF6 autoubiquitination and oligomerization required for activation of NF-kappa-B and JUN. Involved in insulin resistance by acting as insulin-induced signaling scaffold for SRC, AKT1 and INSR. Involved in regulation of inhibitory signaling of natural killer cells by recruiting PTPN6 and PTPN11 to KIR2DL1. Involved in the internalization of the atypical chemokine receptor ACKR3. Acts as an adapter protein coupling FFAR4 receptor to specific downstream signaling pathways, as well as mediating receptor endocytosis. During the activation step of NLRP3 inflammasome, directly associates with NLRP3 leading to inhibition of pro-inflammatory cytokine release and inhibition of inflammation. The polypeptide is Beta-arrestin-2 (Arrb2) (Mus musculus (Mouse)).